We begin with the raw amino-acid sequence, 477 residues long: Bifunctional protein HldE (477 aa).

The ribokinase stretch occupies residues 1 to 318; it reads MKVTLSEFER…ENAVRGRADT (318 aa). K179 is subject to N6-acetyllysine. 195–198 is an ATP binding site; the sequence is NLSE. The active site involves D264. The tract at residues 344-477 is cytidylyltransferase; sequence MTNGVFDILH…IKKIQQDKKG (134 aa).

This sequence in the N-terminal section; belongs to the carbohydrate kinase PfkB family. In the C-terminal section; belongs to the cytidylyltransferase family. In terms of assembly, homodimer.

It carries out the reaction D-glycero-beta-D-manno-heptose 7-phosphate + ATP = D-glycero-beta-D-manno-heptose 1,7-bisphosphate + ADP + H(+). The catalysed reaction is D-glycero-beta-D-manno-heptose 1-phosphate + ATP + H(+) = ADP-D-glycero-beta-D-manno-heptose + diphosphate. It functions in the pathway nucleotide-sugar biosynthesis; ADP-L-glycero-beta-D-manno-heptose biosynthesis; ADP-L-glycero-beta-D-manno-heptose from D-glycero-beta-D-manno-heptose 7-phosphate: step 1/4. It participates in nucleotide-sugar biosynthesis; ADP-L-glycero-beta-D-manno-heptose biosynthesis; ADP-L-glycero-beta-D-manno-heptose from D-glycero-beta-D-manno-heptose 7-phosphate: step 3/4. Catalyzes the phosphorylation of D-glycero-D-manno-heptose 7-phosphate at the C-1 position to selectively form D-glycero-beta-D-manno-heptose-1,7-bisphosphate. Its function is as follows. Catalyzes the ADP transfer from ATP to D-glycero-beta-D-manno-heptose 1-phosphate, yielding ADP-D-glycero-beta-D-manno-heptose. This chain is Bifunctional protein HldE, found in Shigella boydii serotype 18 (strain CDC 3083-94 / BS512).